The chain runs to 267 residues: Small ribosomal subunit protein mS23 (267 aa).

The interval 230–267 (VKTASKDGKSSNGSMGAEDVVEKTTSAWETEFVEEESS) is disordered.

It belongs to the mitochondrion-specific ribosomal protein mS23 family. Component of the mitochondrial small ribosomal subunit.

The protein localises to the mitochondrion. The chain is Small ribosomal subunit protein mS23 (RSM25) from Meyerozyma guilliermondii (strain ATCC 6260 / CBS 566 / DSM 6381 / JCM 1539 / NBRC 10279 / NRRL Y-324) (Yeast).